Consider the following 962-residue polypeptide: Glycine dehydrogenase (decarboxylating) (962 aa).

Lys709 carries the N6-(pyridoxal phosphate)lysine modification.

Belongs to the GcvP family. In terms of assembly, the glycine cleavage system is composed of four proteins: P, T, L and H. The cofactor is pyridoxal 5'-phosphate.

The enzyme catalyses N(6)-[(R)-lipoyl]-L-lysyl-[glycine-cleavage complex H protein] + glycine + H(+) = N(6)-[(R)-S(8)-aminomethyldihydrolipoyl]-L-lysyl-[glycine-cleavage complex H protein] + CO2. In terms of biological role, the glycine cleavage system catalyzes the degradation of glycine. The P protein binds the alpha-amino group of glycine through its pyridoxal phosphate cofactor; CO(2) is released and the remaining methylamine moiety is then transferred to the lipoamide cofactor of the H protein. The polypeptide is Glycine dehydrogenase (decarboxylating) (Shewanella amazonensis (strain ATCC BAA-1098 / SB2B)).